The primary structure comprises 1104 residues: Lon protease homolog, mitochondrial (1104 aa).

A mitochondrion-targeting transit peptide spans 1–58 (MLPLRAFARLAQRPRLSRPTQLARSSLPRPSPSRPAAHYLALAPAPSTRFLHSSPPVL). Residues 8 to 144 (ARLAQRPRLS…PGAGGPKEVA (137 aa)) form a disordered region. Low complexity predominate over residues 22 to 46 (LARSSLPRPSPSRPAAHYLALAPAP). The segment covering 80–103 (KQDDQVEKPLPDAESSKSAEERAK) has biased composition (basic and acidic residues). Residues 104–128 (SQSSKPDIKASSSDSVSSSAPAPGS) show a composition bias toward low complexity. Gly residues predominate over residues 129–139 (ADGGSPPGAGG). The 290-residue stretch at 155 to 444 (VLAIPITHRP…RALVLLKKEL (290 aa)) folds into the Lon N-terminal domain. 597–604 (GPPGVGKT) lines the ATP pocket. The Lon proteolytic domain maps to 895-1082 (SPPAGVSTGL…RQVLHEAFRG (188 aa)). Catalysis depends on residues Ser-987 and Lys-1030.

It belongs to the peptidase S16 family. As to quaternary structure, homohexamer or homoheptamer. Organized in a ring with a central cavity.

It localises to the mitochondrion matrix. It catalyses the reaction Hydrolysis of proteins in presence of ATP.. ATP-dependent serine protease that mediates the selective degradation of misfolded, unassembled or oxidatively damaged polypeptides as well as certain short-lived regulatory proteins in the mitochondrial matrix. May also have a chaperone function in the assembly of inner membrane protein complexes. Participates in the regulation of mitochondrial gene expression and in the maintenance of the integrity of the mitochondrial genome. Binds to mitochondrial DNA in a site-specific manner. The chain is Lon protease homolog, mitochondrial from Cryptococcus neoformans var. neoformans serotype D (strain B-3501A) (Filobasidiella neoformans).